The chain runs to 186 residues: ADP-ribosylation factor-like protein 8A (186 aa).

The segment at residues 1–19 is an intramembrane region (note=Mediates targeting to membranes); sequence MIALFNKLLDWFKALFWKE. GTP contacts are provided by residues 29–35, 71–75, and 130–133; these read QYSGKTT, DIGGQ, and NKRD.

This sequence belongs to the small GTPase superfamily. Arf family. As to quaternary structure, interacts with PLEKHM1. When GTP-bound, interacts with RUFY3 and RUFY4, but not with RUFY1, nor RUFY2.

Its subcellular location is the late endosome membrane. It localises to the lysosome membrane. It is found in the cytoplasm. The protein resides in the cytoskeleton. The protein localises to the spindle. Its subcellular location is the cell projection. It localises to the axon. It is found in the synapse. Its function is as follows. Plays a role in lysosomes motility. In neurons, mediates the anterograde axonal long-range transport of presynaptic lysosome-related vesicles required for presynaptic biogenesis and synaptic function. May play a role in chromosome segregation. The sequence is that of ADP-ribosylation factor-like protein 8A (Arl8a) from Mus musculus (Mouse).